The sequence spans 644 residues: Ribonuclease R (644 aa).

The 319-residue stretch at 211–529 (RINYSHIPFI…LHRLLKELLF (319 aa)) folds into the RNB domain. Residues 573 to 644 (LELLEKEFLG…ITERIKEHVS (72 aa)) enclose the S1 motif domain.

It belongs to the RNR ribonuclease family. RNase R subfamily.

It is found in the cytoplasm. It catalyses the reaction Exonucleolytic cleavage in the 3'- to 5'-direction to yield nucleoside 5'-phosphates.. 3'-5' exoribonuclease that releases 5'-nucleoside monophosphates and is involved in maturation of structured RNAs. The polypeptide is Ribonuclease R (Helicobacter pylori (strain ATCC 700392 / 26695) (Campylobacter pylori)).